The following is a 110-amino-acid chain: Iron-sulfur cluster assembly protein CyaY (110 aa).

The protein belongs to the frataxin family.

Its function is as follows. Involved in iron-sulfur (Fe-S) cluster assembly. May act as a regulator of Fe-S biogenesis. This is Iron-sulfur cluster assembly protein CyaY from Pseudomonas fluorescens (strain Pf0-1).